We begin with the raw amino-acid sequence, 375 residues long: Histidine biosynthesis bifunctional protein HisB (375 aa).

The tract at residues 1-168 (MTPILFVDRD…GIAHELADAP (168 aa)) is histidinol-phosphatase. The active-site Nucleophile is aspartate 8. 3 residues coordinate Mg(2+): aspartate 8, aspartate 10, and aspartate 128. Catalysis depends on aspartate 10, which acts as the Proton donor. The segment at 169 to 375 (RRAVVQRNTK…SALPTTKGAL (207 aa)) is imidazoleglycerol-phosphate dehydratase.

In the N-terminal section; belongs to the histidinol-phosphatase family. It in the C-terminal section; belongs to the imidazoleglycerol-phosphate dehydratase family. Mg(2+) is required as a cofactor.

It localises to the cytoplasm. The enzyme catalyses D-erythro-1-(imidazol-4-yl)glycerol 3-phosphate = 3-(imidazol-4-yl)-2-oxopropyl phosphate + H2O. It catalyses the reaction L-histidinol phosphate + H2O = L-histidinol + phosphate. The protein operates within amino-acid biosynthesis; L-histidine biosynthesis; L-histidine from 5-phospho-alpha-D-ribose 1-diphosphate: step 6/9. Its pathway is amino-acid biosynthesis; L-histidine biosynthesis; L-histidine from 5-phospho-alpha-D-ribose 1-diphosphate: step 8/9. In Xanthomonas oryzae pv. oryzae (strain MAFF 311018), this protein is Histidine biosynthesis bifunctional protein HisB.